Consider the following 175-residue polypeptide: Coagulogen (175 aa).

Disulfide bonds link Cys-8–Cys-167, Cys-10–Cys-95, Cys-60–Cys-161, Cys-65–Cys-121, Cys-75–Cys-168, Cys-88–Cys-140, Cys-127–Cys-170, and Cys-134–Cys-172.

This sequence belongs to the coagulin family. Coagulogen is cleaved after Arg-18 and Arg-46 by a clotting enzyme contained in the hemocyte and activated by a bacterial endotoxin (lipopolysaccharide). This cleavage releases the peptide C and leaves 2 chains of coagulin, A and B, linked by two disulfide bonds. Coagulin molecules interlink to form a gel. Hemolymph.

The protein resides in the secreted. Its function is as follows. Coagulogen is a gel-forming protein of hemolymph; it hinders the spread of invaders by immobilizing them. The polypeptide is Coagulogen (Carcinoscorpius rotundicauda (Mangrove horseshoe crab)).